A 304-amino-acid chain; its full sequence is 15-cis-phytoene synthase (304 aa).

It belongs to the phytoene/squalene synthase family. Requires ATP as cofactor. Mn(2+) is required as a cofactor. It depends on Mg(2+) as a cofactor.

It catalyses the reaction 2 (2E,6E,10E)-geranylgeranyl diphosphate = 15-cis-phytoene + 2 diphosphate. It participates in carotenoid biosynthesis; astaxanthin biosynthesis. Its pathway is carotenoid biosynthesis; phytoene biosynthesis. In terms of biological role, involved in the biosynthesis of carotenoids for the production of astaxanthin. Catalyzes the condensation of two molecules of geranylgeranyl diphosphate (GGPP) to give prephytoene diphosphate (PPPP) and the subsequent rearrangement of the cyclopropylcarbinyl intermediate to yield 15-cis phytoene. The polypeptide is 15-cis-phytoene synthase (crtB) (Paracoccus sp. (strain N81106 / MBIC 01143) (Agrobacterium aurantiacum)).